The following is a 177-amino-acid chain: Calcineurin subunit B (177 aa).

4 consecutive EF-hand domains span residues lysine 25–proline 60, valine 62–glutamine 92, aspartate 94–asparagine 129, and glutamine 135–glutamate 170. The Ca(2+) site is built by aspartate 38, aspartate 40, asparagine 42, threonine 44, glutamate 49, aspartate 70, asparagine 72, aspartate 74, serine 76, glutamate 81, aspartate 107, aspartate 109, aspartate 111, tyrosine 113, glutamate 118, aspartate 148, aspartate 150, aspartate 152, lysine 154, and glutamate 159.

The protein belongs to the calcineurin regulatory subunit family. In terms of assembly, composed of a catalytic subunit (A) and a regulatory subunit (B).

Its function is as follows. Regulatory subunit of calcineurin, a calcium-dependent, calmodulin stimulated protein phosphatase. Confers calcium sensitivity. The polypeptide is Calcineurin subunit B (CNB1) (Naegleria gruberi (Amoeba)).